A 431-amino-acid polypeptide reads, in one-letter code: Interleukin-11 receptor subunit alpha (431 aa).

Positions 1 to 23 (MSSSRSGLTRVLVAVATALVSSS) are cleaved as a signal peptide. The Extracellular segment spans residues 24 to 371 (TPCPQAWGPP…DPLEQVAVLA (348 aa)). The 84-residue stretch at 27–110 (PQAWGPPGVQ…FGGMVTLKLG (84 aa)) folds into the Ig-like C2-type domain. Disulfide bonds link cysteine 48–cysteine 94, cysteine 120–cysteine 130, and cysteine 170–cysteine 180. Fibronectin type-III domains follow at residues 112 to 219 (PPAR…LRPD) and 220 to 317 (PPQG…TPST). Residue asparagine 127 is glycosylated (N-linked (GlcNAc...) asparagine). The disordered stretch occupies residues 151–170 (KTLPGAESQRESPSTGPWPC). N-linked (GlcNAc...) asparagine glycosylation occurs at asparagine 194. Residues 304 to 308 (WSAWS) carry the WSXWS motif motif. A disordered region spans residues 310–360 (EAWGTPSTGPLRDEVPDGSRGHEQKLEAAAQEDSPAPPSPSLQPDPRPLDH). The segment covering 320–335 (LRDEVPDGSRGHEQKL) has biased composition (basic and acidic residues). A compositionally biased stretch (pro residues) spans 344–355 (PAPPSPSLQPDP). Residues 372-392 (SLGIFSFLGLAVGALALGLWL) traverse the membrane as a helical segment. Residues 393–431 (RLRRSGKDGPQKPGFLAPMIPGDKLPGIPNLQRTPENFS) lie on the Cytoplasmic side of the membrane. The disordered stretch occupies residues 402-431 (PQKPGFLAPMIPGDKLPGIPNLQRTPENFS).

It belongs to the type I cytokine receptor family. Type 3 subfamily. In terms of assembly, on IL11 binding, forms a multimer complex with IL6ST/gp130. In terms of processing, a short soluble form is also released from the membrane by proteolysis. The sIL11RA is formed either by limited proteolysis of membrane-bound receptors, a process referred to as ectodomain shedding, or directly secreted from the cells after alternative mRNA splicing. mIL11RA is cleaved by the proteases ADAM10, ELANE and PRTN3.

The protein resides in the membrane. The protein localises to the secreted. In terms of biological role, receptor for interleukin-11 (IL11). The receptor systems for IL6, LIF, OSM, CNTF, IL11 and CT1 can utilize IL6ST for initiating signal transmission. The IL11/IL11RA/IL6ST complex may be involved in the control of proliferation and/or differentiation of skeletogenic progenitor or other mesenchymal cells. Essential for the normal development of craniofacial bones and teeth. Restricts suture fusion and tooth number. Functionally, soluble form of IL11 receptor (sIL11RA) that acts as an agonist of IL11 activity. The IL11:sIL11RA complex binds to IL6ST/gp130 on cell surfaces and induces signaling also on cells that do not express membrane-bound IL11RA in a process called IL11 trans-signaling. This is Interleukin-11 receptor subunit alpha from Rattus norvegicus (Rat).